The chain runs to 184 residues: Ribulose bisphosphate carboxylase small subunit, chloroplastic 2 (184 aa).

The N-terminal 59 residues, 1–59, are a transit peptide targeting the chloroplast; sequence MASSMMSNAATAVAVAATSGGAQANMVAPFNGLKSIASFPVTRKSNDITSIASNGGRVQ.

This sequence belongs to the RuBisCO small chain family. In terms of assembly, heterohexadecamer of 8 large and 8 small subunits.

It is found in the plastid. It localises to the chloroplast. RuBisCO catalyzes two reactions: the carboxylation of D-ribulose 1,5-bisphosphate, the primary event in carbon dioxide fixation, as well as the oxidative fragmentation of the pentose substrate. Both reactions occur simultaneously and in competition at the same active site. Although the small subunit is not catalytic it is essential for maximal activity. In Amaranthus hypochondriacus (Prince-of-Wales feather), this protein is Ribulose bisphosphate carboxylase small subunit, chloroplastic 2.